Reading from the N-terminus, the 987-residue chain is UvrABC system protein A (987 aa).

Position 33–40 (33–40 (GLSGSGKS)) interacts with ATP. The C4-type zinc-finger motif lies at 255-282 (CPVCDYSLPELEPRLFSFNAPVGACPSC). 2 ABC transporter domains span residues 312 to 589 (WDRR…PRSL) and 609 to 938 (PNPK…QFLA). Position 642–649 (642–649 (GVSGSGKS)) interacts with ATP. A C4-type zinc finger spans residues 741 to 767 (CEACQGDGMIKVEMHFLPDVYVPCDVC). Residues 948-987 (ETRPAAMANKPDARPPRKVKPEKVAKAAKSATKKTAKKAS) form a disordered region. Residues 958–972 (PDARPPRKVKPEKVA) are compositionally biased toward basic and acidic residues. Over residues 978-987 (ATKKTAKKAS) the composition is skewed to basic residues.

Belongs to the ABC transporter superfamily. UvrA family. In terms of assembly, forms a heterotetramer with UvrB during the search for lesions.

It localises to the cytoplasm. In terms of biological role, the UvrABC repair system catalyzes the recognition and processing of DNA lesions. UvrA is an ATPase and a DNA-binding protein. A damage recognition complex composed of 2 UvrA and 2 UvrB subunits scans DNA for abnormalities. When the presence of a lesion has been verified by UvrB, the UvrA molecules dissociate. This chain is UvrABC system protein A, found in Xanthomonas axonopodis pv. citri (strain 306).